The following is a 766-amino-acid chain: Pumilio domain-containing protein 12 (766 aa).

Disordered stretches follow at residues 63–98 (KKSSSTSVFDNDGTRDSLCSESSFGSQPAPKKKSKK) and 152–197 (AQEE…GDES). The segment covering 79–88 (SLCSESSFGS) has biased composition (polar residues). Positions 179-193 (PADDENLESVDEQAG) are enriched in acidic residues. The 358-residue stretch at 245-602 (ARAQKCKELW…LYAGITENLY (358 aa)) folds into the PUM-HD domain. Pumilio repeat units lie at residues 313 to 348 (ELTPEIVRMSKNVYSKFFVKKMLKNGTKEQRDIIIN), 461 to 496 (SLKDKIPEFIHTPDGAKLAIKLIWFAPVKERKLIVK), 497 to 534 (NFKDLSVKAAMEHYGHRVLLALFDTVDDTVLLNKVIVS), and 535 to 571 (ELANEMKKLIEDDWGEKVIHYLVHPRDGRGIDKREIT).

This is Pumilio domain-containing protein 12 (puf-12) from Caenorhabditis elegans.